The following is a 236-amino-acid chain: uncharacterized protein (236 aa).

The HTH gntR-type domain occupies 1–69; sequence MLKYQQIATE…RGSGIFVRKH (69 aa). Positions 29–48 form a DNA-binding region, H-T-H motif; that stretch reads LETLMAQFEVSKSTITKSLE.

This is an uncharacterized protein from Bacillus subtilis (strain 168).